Reading from the N-terminus, the 282-residue chain is Peptidoglycan-recognition protein LD (282 aa).

Positions 1–29 (MDSSHIAVRVARRSPSPAAVSQSSYGSLG) are disordered. The Cytoplasmic segment spans residues 1 to 88 (MDSSHIAVRV…RRNPTLHEDC (88 aa)). Residues 89–111 (FNWRSVGLLVMCASALALAAYLL) form a helical membrane-spanning segment. Topologically, residues 112-282 (WRQTQTPDFG…PHYASHQTSK (171 aa)) are extracellular. An intrachain disulfide couples C162 to C166. N222 carries N-linked (GlcNAc...) asparagine glycosylation.

It belongs to the N-acetylmuramoyl-L-alanine amidase 2 family. As to expression, expressed in uninduced hemocytes and mbn-2 cells.

The protein resides in the cell membrane. Functionally, peptidoglycan-recognition protein probably involved in innate immunity by binding to peptidoglycans (PGN) of bacteria and activating the immune response. The protein is Peptidoglycan-recognition protein LD (PGRP-LD) of Drosophila melanogaster (Fruit fly).